The primary structure comprises 299 residues: Undecaprenyl-diphosphatase (299 aa).

8 helical membrane passes run 10-32, 63-83, 112-132, 143-163, 178-198, 213-233, 243-263, and 276-296; these read LFSL…RNLV, PGVS…IAYF, LAIA…KLFW, LPSI…AESF, GFVV…RSGS, AARF…LVEL, GGVL…WLAI, and WIFV…WLSG.

The protein belongs to the UppP family.

It is found in the cell inner membrane. It carries out the reaction di-trans,octa-cis-undecaprenyl diphosphate + H2O = di-trans,octa-cis-undecaprenyl phosphate + phosphate + H(+). Catalyzes the dephosphorylation of undecaprenyl diphosphate (UPP). Confers resistance to bacitracin. This is Undecaprenyl-diphosphatase from Prochlorococcus marinus (strain MIT 9313).